Here is a 447-residue protein sequence, read N- to C-terminus: Exodeoxyribonuclease 7 large subunit (447 aa).

It belongs to the XseA family. In terms of assembly, heterooligomer composed of large and small subunits.

The protein localises to the cytoplasm. The enzyme catalyses Exonucleolytic cleavage in either 5'- to 3'- or 3'- to 5'-direction to yield nucleoside 5'-phosphates.. Its function is as follows. Bidirectionally degrades single-stranded DNA into large acid-insoluble oligonucleotides, which are then degraded further into small acid-soluble oligonucleotides. This is Exodeoxyribonuclease 7 large subunit from Lactiplantibacillus plantarum (strain ATCC BAA-793 / NCIMB 8826 / WCFS1) (Lactobacillus plantarum).